A 440-amino-acid polypeptide reads, in one-letter code: Xylose isomerase (440 aa).

Catalysis depends on residues histidine 100 and aspartate 103. Mg(2+) is bound by residues glutamate 231, glutamate 267, histidine 270, aspartate 295, aspartate 306, aspartate 308, and aspartate 338.

It belongs to the xylose isomerase family. Homotetramer. Mg(2+) serves as cofactor.

Its subcellular location is the cytoplasm. It catalyses the reaction alpha-D-xylose = alpha-D-xylulofuranose. The chain is Xylose isomerase from Paraburkholderia xenovorans (strain LB400).